We begin with the raw amino-acid sequence, 90 residues long: MVKSSFISIISQEDKKENKGSVEFQIVSFTNKIRRLTSHLELHRKDYLSQRGLRKILGKRQRLLSYLAKKNGVRYKELISQLNIRESKTR.

Belongs to the universal ribosomal protein uS15 family. Part of the 30S ribosomal subunit.

The protein localises to the plastid. It is found in the chloroplast. This is Small ribosomal subunit protein uS15c (rps15) from Populus alba (White poplar).